An 82-amino-acid polypeptide reads, in one-letter code: Small ribosomal subunit protein bS16 (82 aa).

The protein belongs to the bacterial ribosomal protein bS16 family.

This Microcystis aeruginosa (strain NIES-843 / IAM M-2473) protein is Small ribosomal subunit protein bS16.